A 301-amino-acid chain; its full sequence is MKEILYRKSIQDRVRIKGIGLHSGKEVNLTAHPAPSGTGIVFEYRKGLEKASISVELSNVVDTSNATTLGDGLHKIQTVEHLLAAIYALGLTDLILEIDAVEVPIMDGSSLPFLQALESAGIVKYPEIIEPIYVQNPLWVVDGDKYLVLLPSDELKVTYTIDFNHPLLKGQNITISLDKETIKQEILPARTFGFLKDVEALQAKGLAMGGSLDNAIVLTQDGYLNQQLRFENECVRHKILDLFGDISIAGRPIIGHYLASKAGHALDISMAKLVMSSVTGDEISKYKSRRIPLFKRKVAVV.

H81, H237, and D241 together coordinate Zn(2+). H264 (proton donor) is an active-site residue.

Belongs to the LpxC family. Requires Zn(2+) as cofactor.

The catalysed reaction is a UDP-3-O-[(3R)-3-hydroxyacyl]-N-acetyl-alpha-D-glucosamine + H2O = a UDP-3-O-[(3R)-3-hydroxyacyl]-alpha-D-glucosamine + acetate. It participates in glycolipid biosynthesis; lipid IV(A) biosynthesis; lipid IV(A) from (3R)-3-hydroxytetradecanoyl-[acyl-carrier-protein] and UDP-N-acetyl-alpha-D-glucosamine: step 2/6. Catalyzes the hydrolysis of UDP-3-O-myristoyl-N-acetylglucosamine to form UDP-3-O-myristoylglucosamine and acetate, the committed step in lipid A biosynthesis. The protein is UDP-3-O-acyl-N-acetylglucosamine deacetylase of Leptospira borgpetersenii serovar Hardjo-bovis (strain JB197).